Reading from the N-terminus, the 156-residue chain is ATP synthase subunit b (156 aa).

A helical transmembrane segment spans residues L7–P27.

This sequence belongs to the ATPase B chain family. In terms of assembly, F-type ATPases have 2 components, F(1) - the catalytic core - and F(0) - the membrane proton channel. F(1) has five subunits: alpha(3), beta(3), gamma(1), delta(1), epsilon(1). F(0) has three main subunits: a(1), b(2) and c(10-14). The alpha and beta chains form an alternating ring which encloses part of the gamma chain. F(1) is attached to F(0) by a central stalk formed by the gamma and epsilon chains, while a peripheral stalk is formed by the delta and b chains.

Its subcellular location is the cell inner membrane. Its function is as follows. F(1)F(0) ATP synthase produces ATP from ADP in the presence of a proton or sodium gradient. F-type ATPases consist of two structural domains, F(1) containing the extramembraneous catalytic core and F(0) containing the membrane proton channel, linked together by a central stalk and a peripheral stalk. During catalysis, ATP synthesis in the catalytic domain of F(1) is coupled via a rotary mechanism of the central stalk subunits to proton translocation. In terms of biological role, component of the F(0) channel, it forms part of the peripheral stalk, linking F(1) to F(0). The protein is ATP synthase subunit b of Paraburkholderia phytofirmans (strain DSM 17436 / LMG 22146 / PsJN) (Burkholderia phytofirmans).